A 569-amino-acid chain; its full sequence is Urease subunit alpha (569 aa).

In terms of domain architecture, Urease spans 131-569 (GSIDTHIHFI…VPMAQKYFLL (439 aa)). Ni(2+)-binding residues include histidine 136, histidine 138, and lysine 219. Lysine 219 bears the N6-carboxylysine mark. Histidine 221 lines the substrate pocket. The Ni(2+) site is built by histidine 248 and histidine 274. Residue histidine 322 is the Proton donor of the active site. Ni(2+) is bound at residue aspartate 362.

It belongs to the metallo-dependent hydrolases superfamily. Urease alpha subunit family. As to quaternary structure, heterotrimer of UreA (gamma), UreB (beta) and UreC (alpha) subunits. Two heterotrimers associate to form the active enzyme. In most bacteria it is thought that three heterotrimers form the active enzyme. Requires Ni cation as cofactor. Carboxylation allows a single lysine to coordinate two nickel ions.

The protein resides in the cytoplasm. It carries out the reaction urea + 2 H2O + H(+) = hydrogencarbonate + 2 NH4(+). Its pathway is nitrogen metabolism; urea degradation; CO(2) and NH(3) from urea (urease route): step 1/1. Its activity is regulated as follows. Inhibited by HgCl2 and acetohydroxyamic acid slightly by EDTA, but not by boric acid or L-methionine-DL-sulfoximine. The chain is Urease subunit alpha from Prochlorococcus marinus subsp. pastoris (strain PCC 9511).